A 92-amino-acid chain; its full sequence is Small ribosomal subunit protein uS19 (92 aa).

It belongs to the universal ribosomal protein uS19 family.

Its function is as follows. Protein S19 forms a complex with S13 that binds strongly to the 16S ribosomal RNA. This Staphylococcus aureus (strain Mu3 / ATCC 700698) protein is Small ribosomal subunit protein uS19.